Consider the following 138-residue polypeptide: Cysteine desulfuration protein SufE (138 aa).

Residue Cys51 is the Cysteine persulfide intermediate of the active site.

This sequence belongs to the SufE family. As to quaternary structure, homodimer. Interacts with SufS.

Its subcellular location is the cytoplasm. Its pathway is cofactor biosynthesis; iron-sulfur cluster biosynthesis. In terms of biological role, participates in cysteine desulfuration mediated by SufS. Cysteine desulfuration mobilizes sulfur from L-cysteine to yield L-alanine and constitutes an essential step in sulfur metabolism for biosynthesis of a variety of sulfur-containing biomolecules. Functions as a sulfur acceptor for SufS, by mediating the direct transfer of the sulfur atom from the S-sulfanylcysteine of SufS, an intermediate product of cysteine desulfuration process. This chain is Cysteine desulfuration protein SufE, found in Cronobacter sakazakii (strain ATCC BAA-894) (Enterobacter sakazakii).